The chain runs to 79 residues: Sigma-O factor regulatory protein RsoA (79 aa).

Together with RNA polymerase sigma factor SigO, positively regulates the expression of at least three operons, including oxdC-yvrL, sigO-rsoA and yvrJ. Required for the acid stress-dependent induction of the oxalate decarboxylase oxdC. This chain is Sigma-O factor regulatory protein RsoA (rsoA), found in Bacillus subtilis (strain 168).